A 224-amino-acid chain; its full sequence is MNSLWPLLRLASPQLPIGAYTYSQGLESAIDQGIVWDADSVRLWLSDQLAMNIACFEAPLFARMLEAAAQGQWQQLFYWAEEYVASRETRELYQESRQMGFSLVQLLNDLPELDEAMRHQLLGFVEPPLPLVWAVAARTWNLDTRSAVAAWLWGWLENQLAALMKALPLGQQAAQRLLSQLLPELDEALETALACSDEQLANGTLGLSIASMIHETQYTRLFRS.

This sequence belongs to the UreF family. As to quaternary structure, ureD, UreF and UreG form a complex that acts as a GTP-hydrolysis-dependent molecular chaperone, activating the urease apoprotein by helping to assemble the nickel containing metallocenter of UreC. The UreE protein probably delivers the nickel.

The protein resides in the cytoplasm. Its function is as follows. Required for maturation of urease via the functional incorporation of the urease nickel metallocenter. The protein is Urease accessory protein UreF of Nitrosococcus oceani (strain ATCC 19707 / BCRC 17464 / JCM 30415 / NCIMB 11848 / C-107).